The chain runs to 277 residues: Phosphate import ATP-binding protein PstB 2 (277 aa).

Positions 31 to 272 constitute an ABC transporter domain; sequence IEVPGLNLFY…PAKKQTEDYI (242 aa). Position 63–70 (63–70) interacts with ATP; the sequence is GPSGCGKS.

The protein belongs to the ABC transporter superfamily. Phosphate importer (TC 3.A.1.7) family. The complex is composed of two ATP-binding proteins (PstB), two transmembrane proteins (PstC and PstA) and a solute-binding protein (PstS).

The protein resides in the cell inner membrane. It carries out the reaction phosphate(out) + ATP + H2O = ADP + 2 phosphate(in) + H(+). Part of the ABC transporter complex PstSACB involved in phosphate import. Responsible for energy coupling to the transport system. The chain is Phosphate import ATP-binding protein PstB 2 from Pseudomonas savastanoi pv. phaseolicola (strain 1448A / Race 6) (Pseudomonas syringae pv. phaseolicola (strain 1448A / Race 6)).